The following is a 548-amino-acid chain: MDIRKRKNAGGDGDGGADGASVNVGDEPDSFGGRIGSPRRIFLFCLAFRVVNALLIQTYFNPDEHWQSLEVAHRTIFGYGYMTWEWKRGIRSYLHPMLFAFLYKLLQVTGLDTPYIMIKAPRLMQSIFSAIGDLYLYKLSDALYGGNVATWSLFCQMANWFIFFCLNRTFSNCLETVLTIMGLYYWPCIRDSSIDYPVNRKWGLVIAALACAIRPTSAVIWLYVGMLELFLTPNKVKFIILEVIPIGSLVLGFTCLLDRLMYGSWVIVPLNFLKFNFLSSGGDYYGTHPWHWYFTQGFLVMLFTFTPFSIAGIIKSKNQKLSALILWVLAIYSILGHKEFRFVLPVLPIALIFSGYAFAQMEVSGSSSSSSVTKKKQVPRQNHTKWSPKLRLSVYFLLATNIPMALYMSLFHQRGTEDAMNYLSDEAYKGRVKSILFLMPCHSTPYYSTLHRNIPMQFLDCTPSAEKGELDESDQFLVNPLGFASELARNWSEPPSHIVLFASEETKLRDFMIQHSFKEVRRFFHAHFKVDRDLQSSVVVYVVNHAFP.

The disordered stretch occupies residues 1-23; sequence MDIRKRKNAGGDGDGGADGASVN. A run of 3 helical transmembrane segments spans residues 41 to 61, 98 to 118, and 146 to 166; these read IFLFCLAFRVVNALLIQTYFN, LFAFLYKLLQVTGLDTPYIMI, and GNVATWSLFCQMANWFIFFCL. Residue asparagine 167 is glycosylated (N-linked (GlcNAc...) asparagine). Helical transmembrane passes span 169–189, 204–224, 238–258, 260–280, 294–314, 320–340, and 342–362; these read TFSNCLETVLTIMGLYYWPCI, LVIAALACAIRPTSAVIWLYV, FIILEVIPIGSLVLGFTCLLD, LMYGSWVIVPLNFLKFNFLSS, FTQGFLVMLFTFTPFSIAGII, KLSALILWVLAIYSILGHKEF, and FVLPVLPIALIFSGYAFAQME. Asparagine 382 carries N-linked (GlcNAc...) asparagine glycosylation. The chain crosses the membrane as a helical span at residues 392 to 412; it reads LSVYFLLATNIPMALYMSLFH. Asparagine 490 is a glycosylation site (N-linked (GlcNAc...) asparagine).

The protein belongs to the glycosyltransferase 22 family. Mostly expressed, mainly in vascular tissues, in leaves, roots, stems, flowers, siliques and pollen, and, to a lower extent, in seedlings.

It is found in the endoplasmic reticulum membrane. Mannosyltransferase involved in glycosylphosphatidylinositol-anchor biosynthesis. Required for the pollen tube micropylar guidance and embryo development by regulating GPI-anchor mediated protein localization (e.g. COBL10 and A36). This chain is Mannosyltransferase APTG1, found in Arabidopsis thaliana (Mouse-ear cress).